We begin with the raw amino-acid sequence, 230 residues long: Germin-like protein 5-1 (230 aa).

The first 20 residues, Met1–Gly20, serve as a signal peptide directing secretion. Cys38 and Cys53 are oxidised to a cystine. Residues Tyr86 to Asp219 form the Cupin type-1 domain. The Mn(2+) site is built by His119, His121, Glu126, and His167. Asn172 is a glycosylation site (N-linked (GlcNAc...) asparagine).

This sequence belongs to the germin family. As to quaternary structure, oligomer (believed to be a pentamer but probably hexamer).

Its subcellular location is the secreted. It is found in the extracellular space. The protein localises to the apoplast. Functionally, may play a role in plant defense. Probably has no oxalate oxidase activity even if the active site is conserved. This is Germin-like protein 5-1 from Oryza sativa subsp. japonica (Rice).